The sequence spans 103 residues: Phosphoribosyl-ATP pyrophosphatase (103 aa).

This sequence belongs to the PRA-PH family.

It localises to the cytoplasm. It carries out the reaction 1-(5-phospho-beta-D-ribosyl)-ATP + H2O = 1-(5-phospho-beta-D-ribosyl)-5'-AMP + diphosphate + H(+). The protein operates within amino-acid biosynthesis; L-histidine biosynthesis; L-histidine from 5-phospho-alpha-D-ribose 1-diphosphate: step 2/9. The protein is Phosphoribosyl-ATP pyrophosphatase of Cereibacter sphaeroides (strain KD131 / KCTC 12085) (Rhodobacter sphaeroides).